Consider the following 180-residue polypeptide: Sperm protein associated with the nucleus on the X chromosome N2 (180 aa).

Disordered stretches follow at residues 1–46 and 64–180; these read MEQP…KTKT and NSNQ…GGED. Positions 10–26 are enriched in basic and acidic residues; that stretch reads GEKRKSPCESNNKKNDE. Over residues 82-169 the composition is skewed to acidic residues; that stretch reads QEEEDEGLDS…SSQEDEDLDS (88 aa). Low complexity predominate over residues 170–180; that stretch reads SEGSSQEGGED.

Belongs to the SPAN-X family.

This chain is Sperm protein associated with the nucleus on the X chromosome N2 (SPANXN2), found in Homo sapiens (Human).